The sequence spans 607 residues: Protein PLASTID MOVEMENT IMPAIRED 2 (607 aa).

2 coiled-coil regions span residues 66–295 (KAKK…NAEL) and 329–445 (MLER…ESRR).

This sequence belongs to the WEB family. In terms of assembly, interacts with WEB1. Ubiquitous but preferentially in chloroplast-containing tissues.

It localises to the cytoplasm. In terms of biological role, required for the chloroplast avoidance response under high intensity blue light. This avoidance response consists in the relocation of chloroplasts on the anticlinal side of exposed cells. Acts in association with WEB1 to maintain the velocity of chloroplast photorelocation movement via cp-actin filaments regulation. The chain is Protein PLASTID MOVEMENT IMPAIRED 2 (PMI2) from Arabidopsis thaliana (Mouse-ear cress).